A 253-amino-acid polypeptide reads, in one-letter code: 5'/3'-nucleotidase SurE (253 aa).

4 residues coordinate a divalent metal cation: aspartate 8, aspartate 9, serine 39, and asparagine 92.

This sequence belongs to the SurE nucleotidase family. It depends on a divalent metal cation as a cofactor.

The protein localises to the cytoplasm. It catalyses the reaction a ribonucleoside 5'-phosphate + H2O = a ribonucleoside + phosphate. It carries out the reaction a ribonucleoside 3'-phosphate + H2O = a ribonucleoside + phosphate. The catalysed reaction is [phosphate](n) + H2O = [phosphate](n-1) + phosphate + H(+). In terms of biological role, nucleotidase with a broad substrate specificity as it can dephosphorylate various ribo- and deoxyribonucleoside 5'-monophosphates and ribonucleoside 3'-monophosphates with highest affinity to 3'-AMP. Also hydrolyzes polyphosphate (exopolyphosphatase activity) with the preference for short-chain-length substrates (P20-25). Might be involved in the regulation of dNTP and NTP pools, and in the turnover of 3'-mononucleotides produced by numerous intracellular RNases (T1, T2, and F) during the degradation of various RNAs. The polypeptide is 5'/3'-nucleotidase SurE (Klebsiella pneumoniae (strain 342)).